The primary structure comprises 330 residues: MDIAIIGASGYAGGDLIRLLLTHKEADIVCATSRKLAGTPVTKDHIHLKNLIDLEYTNPDVENIDADFAFLAVPHTAAMQYAGKLKERGIKTVDFSADYRLPREIYEKTYGVKHSDYFKAPYGIPELHRNEVKNASFVANPGCFPTGATLAAAPVAKLAHTIIYDSKSGVSGAGDSISETTHFPNVAENILPYKITAHRHLPEMRQEAAFLGSKANVYFTPHLLPAIRGIITTAHILFNEPMELEMIQKLYQDFYKNEPFVRLQPAKLGGVRGSNFCDINFELENDGTRLVAVSAIDNLVKGAAGQAVQNMNIMCGFDEAEGIRMPGMFP.

Cys-143 is an active-site residue.

The protein belongs to the NAGSA dehydrogenase family. Type 1 subfamily.

The protein localises to the cytoplasm. It carries out the reaction N-acetyl-L-glutamate 5-semialdehyde + phosphate + NADP(+) = N-acetyl-L-glutamyl 5-phosphate + NADPH + H(+). Its pathway is amino-acid biosynthesis; L-arginine biosynthesis; N(2)-acetyl-L-ornithine from L-glutamate: step 3/4. Its function is as follows. Catalyzes the NADPH-dependent reduction of N-acetyl-5-glutamyl phosphate to yield N-acetyl-L-glutamate 5-semialdehyde. The sequence is that of N-acetyl-gamma-glutamyl-phosphate reductase from Methanocorpusculum labreanum (strain ATCC 43576 / DSM 4855 / Z).